The sequence spans 313 residues: tRNA dimethylallyltransferase (313 aa).

Residue 17 to 24 (GPTASGKT) participates in ATP binding. 19–24 (TASGKT) lines the substrate pocket. Interaction with substrate tRNA stretches follow at residues 42-45 (DSAL), 166-170 (QRLSR), 247-252 (RCVGYR), and 280-287 (KRQITWLR).

Belongs to the IPP transferase family. Monomer. Mg(2+) serves as cofactor.

The enzyme catalyses adenosine(37) in tRNA + dimethylallyl diphosphate = N(6)-dimethylallyladenosine(37) in tRNA + diphosphate. In terms of biological role, catalyzes the transfer of a dimethylallyl group onto the adenine at position 37 in tRNAs that read codons beginning with uridine, leading to the formation of N6-(dimethylallyl)adenosine (i(6)A). This chain is tRNA dimethylallyltransferase, found in Photorhabdus laumondii subsp. laumondii (strain DSM 15139 / CIP 105565 / TT01) (Photorhabdus luminescens subsp. laumondii).